Here is a 130-residue protein sequence, read N- to C-terminus: Small ribosomal subunit protein uS8 (130 aa).

It belongs to the universal ribosomal protein uS8 family. Part of the 30S ribosomal subunit.

In terms of biological role, one of the primary rRNA binding proteins, it binds directly to 16S rRNA central domain where it helps coordinate assembly of the platform of the 30S subunit. This is Small ribosomal subunit protein uS8 from Methanoculleus marisnigri (strain ATCC 35101 / DSM 1498 / JR1).